A 188-amino-acid chain; its full sequence is Elongation factor P (188 aa).

The protein belongs to the elongation factor P family.

It localises to the cytoplasm. Its pathway is protein biosynthesis; polypeptide chain elongation. Its function is as follows. Involved in peptide bond synthesis. Stimulates efficient translation and peptide-bond synthesis on native or reconstituted 70S ribosomes in vitro. Probably functions indirectly by altering the affinity of the ribosome for aminoacyl-tRNA, thus increasing their reactivity as acceptors for peptidyl transferase. The polypeptide is Elongation factor P (Mycoplasma mobile (strain ATCC 43663 / 163K / NCTC 11711) (Mesomycoplasma mobile)).